A 125-amino-acid chain; its full sequence is MAPAKKGGEKKKGRSAINEVVTREYTINIHKRIHGVGFKKRAPRALKEIRKFAMKEMGTPDVRIDTRLNKAVWAKGIRNVPYRIRVRLSRKRNEDEDSPNKLYTLVTYVPVTTFKNLQTVNVDEN.

M1 carries the N-acetylmethionine modification. S15 carries the phosphoserine modification. An N6-succinyllysine mark is found at K55 and K70. At K75 the chain carries N6-acetyllysine; alternate. An N6-succinyllysine; alternate modification is found at K75. S98 is subject to Phosphoserine.

The protein belongs to the eukaryotic ribosomal protein eL31 family. In terms of assembly, component of the large ribosomal subunit.

The protein resides in the cytoplasm. Functionally, component of the large ribosomal subunit. The ribosome is a large ribonucleoprotein complex responsible for the synthesis of proteins in the cell. This chain is Large ribosomal subunit protein eL31 (RPL31), found in Oryctolagus cuniculus (Rabbit).